Consider the following 447-residue polypeptide: Asparagine--tRNA ligase (447 aa).

The protein belongs to the class-II aminoacyl-tRNA synthetase family. As to quaternary structure, homodimer.

It is found in the cytoplasm. The enzyme catalyses tRNA(Asn) + L-asparagine + ATP = L-asparaginyl-tRNA(Asn) + AMP + diphosphate + H(+). The polypeptide is Asparagine--tRNA ligase (Lactococcus lactis subsp. lactis (strain IL1403) (Streptococcus lactis)).